A 498-amino-acid chain; its full sequence is ATP synthase subunit beta, chloroplastic (498 aa).

Glycine 172 to threonine 179 serves as a coordination point for ATP.

Belongs to the ATPase alpha/beta chains family. In terms of assembly, F-type ATPases have 2 components, CF(1) - the catalytic core - and CF(0) - the membrane proton channel. CF(1) has five subunits: alpha(3), beta(3), gamma(1), delta(1), epsilon(1). CF(0) has four main subunits: a(1), b(1), b'(1) and c(9-12).

The protein localises to the plastid. The protein resides in the chloroplast thylakoid membrane. The enzyme catalyses ATP + H2O + 4 H(+)(in) = ADP + phosphate + 5 H(+)(out). In terms of biological role, produces ATP from ADP in the presence of a proton gradient across the membrane. The catalytic sites are hosted primarily by the beta subunits. This is ATP synthase subunit beta, chloroplastic from Whiteheadia bifolia (Elephants ears).